A 399-amino-acid chain; its full sequence is Phosphoglycerate kinase (399 aa).

Substrate-binding positions include 22–24 (DFN), Arg-38, 61–64 (HLGR), Arg-119, and Arg-152. ATP is bound by residues Lys-205, Gly-296, Glu-327, and 353-356 (GGDT).

The protein belongs to the phosphoglycerate kinase family. As to quaternary structure, monomer.

The protein localises to the cytoplasm. The catalysed reaction is (2R)-3-phosphoglycerate + ATP = (2R)-3-phospho-glyceroyl phosphate + ADP. It functions in the pathway carbohydrate degradation; glycolysis; pyruvate from D-glyceraldehyde 3-phosphate: step 2/5. This Nitratiruptor sp. (strain SB155-2) protein is Phosphoglycerate kinase.